We begin with the raw amino-acid sequence, 197 residues long: Phosphoheptose isomerase (197 aa).

In terms of domain architecture, SIS spans 34–196; it reads MVQCLLGGNK…DRTLFPQDEQ (163 aa). Residue 49–51 participates in substrate binding; sequence NGG. His58 and Glu62 together coordinate Zn(2+). Substrate-binding positions include Glu62, 91–92, 117–119, Ser122, and Gln172; these read ND and STS. Zn(2+) contacts are provided by Gln172 and His180.

Belongs to the SIS family. GmhA subfamily. Homotetramer. It depends on Zn(2+) as a cofactor.

The protein localises to the cytoplasm. It catalyses the reaction 2 D-sedoheptulose 7-phosphate = D-glycero-alpha-D-manno-heptose 7-phosphate + D-glycero-beta-D-manno-heptose 7-phosphate. It participates in carbohydrate biosynthesis; D-glycero-D-manno-heptose 7-phosphate biosynthesis; D-glycero-alpha-D-manno-heptose 7-phosphate and D-glycero-beta-D-manno-heptose 7-phosphate from sedoheptulose 7-phosphate: step 1/1. Functionally, catalyzes the isomerization of sedoheptulose 7-phosphate in D-glycero-D-manno-heptose 7-phosphate. This Shewanella oneidensis (strain ATCC 700550 / JCM 31522 / CIP 106686 / LMG 19005 / NCIMB 14063 / MR-1) protein is Phosphoheptose isomerase.